The chain runs to 71 residues: Beta-defensin 124 (71 aa).

An N-terminal signal peptide occupies residues 1–22 (MTQLLLFLVALLVLGHVPSGRS). Intrachain disulfides connect Cys27–Cys54, Cys34–Cys48, and Cys38–Cys55.

The protein belongs to the beta-defensin family.

It localises to the secreted. Functionally, has antibacterial activity. This chain is Beta-defensin 124 (DEFB124), found in Homo sapiens (Human).